The primary structure comprises 225 residues: Uracil-DNA glycosylase (225 aa).

The active-site Proton acceptor is the aspartate 65.

This sequence belongs to the uracil-DNA glycosylase (UDG) superfamily. UNG family.

The protein localises to the cytoplasm. The catalysed reaction is Hydrolyzes single-stranded DNA or mismatched double-stranded DNA and polynucleotides, releasing free uracil.. In terms of biological role, excises uracil residues from the DNA which can arise as a result of misincorporation of dUMP residues by DNA polymerase or due to deamination of cytosine. This is Uracil-DNA glycosylase from Clostridium perfringens (strain SM101 / Type A).